Here is a 250-residue protein sequence, read N- to C-terminus: Ribonuclease PH (250 aa).

Phosphate is bound by residues Arg99 and Gly137–Arg139.

It belongs to the RNase PH family. Homohexameric ring arranged as a trimer of dimers.

The catalysed reaction is tRNA(n+1) + phosphate = tRNA(n) + a ribonucleoside 5'-diphosphate. Phosphorolytic 3'-5' exoribonuclease that plays an important role in tRNA 3'-end maturation. Removes nucleotide residues following the 3'-CCA terminus of tRNAs; can also add nucleotides to the ends of RNA molecules by using nucleoside diphosphates as substrates, but this may not be physiologically important. Probably plays a role in initiation of 16S rRNA degradation (leading to ribosome degradation) during starvation. This chain is Ribonuclease PH, found in Bordetella parapertussis (strain 12822 / ATCC BAA-587 / NCTC 13253).